A 55-amino-acid polypeptide reads, in one-letter code: Large ribosomal subunit protein bL33 (55 aa).

This sequence belongs to the bacterial ribosomal protein bL33 family.

The sequence is that of Large ribosomal subunit protein bL33 from Novosphingobium aromaticivorans (strain ATCC 700278 / DSM 12444 / CCUG 56034 / CIP 105152 / NBRC 16084 / F199).